Reading from the N-terminus, the 401-residue chain is Odorant receptor 88a (401 aa).

Residues 1–26 (MKPTEIKKPYRMEEFLRPQMFQEVAQ) are Cytoplasmic-facing. Residues 27 to 47 (MVHFQWRRNPVDNSMVNASMV) traverse the membrane as a helical segment. Topologically, residues 48–52 (PFCLS) are extracellular. The chain crosses the membrane as a helical span at residues 53–73 (AFLNVLFFGCNGWDIIGHFWL). The Cytoplasmic portion of the chain corresponds to 74–142 (GHPANQNPPV…NFWQRYRFIR (69 aa)). The helical transmembrane segment at 143–163 (IYSHLGGPMFCVVPLALFLLT) threads the bilayer. The Extracellular segment spans residues 164–191 (HEGKDTPVAQHEQLLGGWLPCGVRKDPN). A helical membrane pass occupies residues 192–212 (FYLLVWSFDLMCTTCGVSFFV). Residues 213 to 277 (TFDNLFNVMQ…LCRKYNDIFK (65 aa)) are Cytoplasmic-facing. A helical transmembrane segment spans residues 278–298 (VAFLVSNFVGAGSLCFYLFML). At 299–303 (SETSD) the chain is on the extracellular side. Residues 304-324 (VLIIAQYILPTLVLVGFTFEI) traverse the membrane as a helical segment. Topologically, residues 325 to 370 (CLRGTQLEKASEGLESSLRSQEWYLGSRRYRKFYLLWTQYCQRTQQ) are cytoplasmic. The chain crosses the membrane as a helical span at residues 371-391 (LGAFGLIQVNMVHFTEIMQLA). Topologically, residues 392–401 (YRLFTFLKSH) are extracellular.

The protein belongs to the insect chemoreceptor superfamily. Heteromeric odorant receptor channel (TC 1.A.69) family. Or49a subfamily. As to quaternary structure, interacts with Orco. Complexes exist early in the endomembrane system in olfactory sensory neurons (OSNs), coupling these complexes to the conserved ciliary trafficking pathway. In terms of tissue distribution, expressed in olfactory sensory neurons in the antenna.

It localises to the cell membrane. In terms of biological role, odorant receptor which mediates acceptance or avoidance behavior, depending on its substrates. The odorant receptor repertoire encodes a large collection of odor stimuli that vary widely in identity, intensity, and duration. May form a complex with Orco to form odorant-sensing units, providing sensitive and prolonged odorant signaling and calcium permeability. The sequence is that of Odorant receptor 88a (Or88a) from Drosophila melanogaster (Fruit fly).